A 161-amino-acid polypeptide reads, in one-letter code: MDQEAVGNIVLLAIVTLISVVQNGFFAHKVEHESKTHNGRSFQRTGTLAFERVYTANQNCVDAYPTFLVMLWSAGLLCSQVPAAFAGLMYLFVRQKYFVGYLGERTQSTPGYIFGKRIILFLFAMSLAGILNYFFIALFGSDFENYIKTVTTTISPLLLIP.

Residues 1–8 (MDQEAVGN) lie on the Lumenal side of the membrane. Residues 9-30 (IVLLAIVTLISVVQNGFFAHKV) form a helical membrane-spanning segment. Residues 31 to 52 (EHESKTHNGRSFQRTGTLAFER) lie on the Cytoplasmic side of the membrane. The helical transmembrane segment at 53–77 (VYTANQNCVDAYPTFLVMLWSAGLL) threads the bilayer. Residues 78–80 (CSQ) are Lumenal-facing. Residues 81 to 102 (VPAAFAGLMYLFVRQKYFVGYL) traverse the membrane as a helical segment. Over 103-107 (GERTQ) the chain is Cytoplasmic. Residues 108–115 (STPGYIFG) lie within the membrane without spanning it. A helical membrane pass occupies residues 116 to 128 (KRIILFLFAMSLA). The Lumenal portion of the chain corresponds to 129-161 (GILNYFFIALFGSDFENYIKTVTTTISPLLLIP).

The protein belongs to the MAPEG family. As to quaternary structure, homotrimer. Interacts with LTC4S and ALOX5.

The protein resides in the nucleus membrane. It localises to the endoplasmic reticulum membrane. Functionally, required for leukotriene biosynthesis by ALOX5 (5-lipoxygenase). Anchors ALOX5 to the membrane. Binds arachidonic acid, and could play an essential role in the transfer of arachidonic acid to ALOX5. Binds to MK-886, a compound that blocks the biosynthesis of leukotrienes. This Bos taurus (Bovine) protein is Arachidonate 5-lipoxygenase-activating protein (ALOX5AP).